The primary structure comprises 335 residues: Holliday junction branch migration complex subunit RuvB (335 aa).

Residues 1 to 181 are large ATPase domain (RuvB-L); sequence MERIVEVEKF…FGMHFRLQFY (181 aa). Residues L20, R21, G62, K65, T66, T67, 128–130, R171, Y181, and R218 contribute to the ATP site; that span reads EDF. T66 serves as a coordination point for Mg(2+). The tract at residues 182–252 is small ATPAse domain (RuvB-S); it reads TPQELAQIIT…RTQKALEALG (71 aa). Positions 255-335 are head domain (RuvB-H); that stretch reads ERGFDELDLK…LTPNIQNSLF (81 aa). DNA contacts are provided by R309 and R314.

Belongs to the RuvB family. In terms of assembly, homohexamer. Forms an RuvA(8)-RuvB(12)-Holliday junction (HJ) complex. HJ DNA is sandwiched between 2 RuvA tetramers; dsDNA enters through RuvA and exits via RuvB. An RuvB hexamer assembles on each DNA strand where it exits the tetramer. Each RuvB hexamer is contacted by two RuvA subunits (via domain III) on 2 adjacent RuvB subunits; this complex drives branch migration. In the full resolvosome a probable DNA-RuvA(4)-RuvB(12)-RuvC(2) complex forms which resolves the HJ.

Its subcellular location is the cytoplasm. The catalysed reaction is ATP + H2O = ADP + phosphate + H(+). The RuvA-RuvB-RuvC complex processes Holliday junction (HJ) DNA during genetic recombination and DNA repair, while the RuvA-RuvB complex plays an important role in the rescue of blocked DNA replication forks via replication fork reversal (RFR). RuvA specifically binds to HJ cruciform DNA, conferring on it an open structure. The RuvB hexamer acts as an ATP-dependent pump, pulling dsDNA into and through the RuvAB complex. RuvB forms 2 homohexamers on either side of HJ DNA bound by 1 or 2 RuvA tetramers; 4 subunits per hexamer contact DNA at a time. Coordinated motions by a converter formed by DNA-disengaged RuvB subunits stimulates ATP hydrolysis and nucleotide exchange. Immobilization of the converter enables RuvB to convert the ATP-contained energy into a lever motion, pulling 2 nucleotides of DNA out of the RuvA tetramer per ATP hydrolyzed, thus driving DNA branch migration. The RuvB motors rotate together with the DNA substrate, which together with the progressing nucleotide cycle form the mechanistic basis for DNA recombination by continuous HJ branch migration. Branch migration allows RuvC to scan DNA until it finds its consensus sequence, where it cleaves and resolves cruciform DNA. In Nitratiruptor sp. (strain SB155-2), this protein is Holliday junction branch migration complex subunit RuvB.